Consider the following 100-residue polypeptide: Urease subunit gamma (100 aa).

The protein belongs to the urease gamma subunit family. In terms of assembly, heterotrimer of UreA (gamma), UreB (beta) and UreC (alpha) subunits. Three heterotrimers associate to form the active enzyme.

The protein resides in the cytoplasm. The catalysed reaction is urea + 2 H2O + H(+) = hydrogencarbonate + 2 NH4(+). It functions in the pathway nitrogen metabolism; urea degradation; CO(2) and NH(3) from urea (urease route): step 1/1. This chain is Urease subunit gamma, found in Leptothrix cholodnii (strain ATCC 51168 / LMG 8142 / SP-6) (Leptothrix discophora (strain SP-6)).